Reading from the N-terminus, the 357-residue chain is Inner membrane protein YcfT (357 aa).

The Cytoplasmic portion of the chain corresponds to 1 to 12 (MKQKELWINQIK). A helical membrane pass occupies residues 13–33 (GLCICLVVIYHSVITFYPHLT). At 34–49 (TFQHPLSEVLSKCWIY) the chain is on the periplasmic side. A helical membrane pass occupies residues 50–70 (FNLYLAPFRMPVFFFISGYLI). The Cytoplasmic segment spans residues 71–86 (RRYIDSVPWGNCLDKR). A helical transmembrane segment spans residues 87–107 (IWNIFWVLALWGVVQWLALSA). Topologically, residues 108 to 135 (LNQWLAPERDLSNASNAAYADSTGEFLH) are periplasmic. A helical transmembrane segment spans residues 136–156 (GMITASTSLWYLYALIVYFVV). Residues 157-162 (CKIFSR) lie on the Cytoplasmic side of the membrane. A helical membrane pass occupies residues 163 to 183 (LALPLFALFVLLSVAVNFVPT). Residues 184 to 196 (PWWGMNSVIRNLP) are Periplasmic-facing. The helical transmembrane segment at 197 to 217 (YYSLGAWFGATIMTCVKEVPL) threads the bilayer. At 218 to 231 (RRHLLMASLLTVLA) the chain is on the cytoplasmic side. The chain crosses the membrane as a helical span at residues 232–252 (VGAWLFTISLLLSLVSIVVIM). At 253–310 (KLFYQYEQRFGMRSTSLLNVIGSNTIAIYTTHRILVEIFSLTLLAQMNAARWSPQVEL) the chain is on the periplasmic side. Residues 311-331 (TLLLVYPFVSLFICTVAGLLV) form a helical membrane-spanning segment. The Cytoplasmic portion of the chain corresponds to 332-357 (RKLSQRAFSDLLFSPPSLPAAVSYSR).

This sequence belongs to the acyltransferase 3 family.

It localises to the cell inner membrane. This chain is Inner membrane protein YcfT (ycfT), found in Escherichia coli (strain K12).